The chain runs to 214 residues: Phosphoribosylglycinamide formyltransferase (214 aa).

A N(1)-(5-phospho-beta-D-ribosyl)glycinamide-binding site is contributed by 12–14 (GSN). Residues 105–108 (LLIL) and Asn123 contribute to the (6R)-10-formyltetrahydrofolate site. His125 acts as the Proton donor in catalysis. Asp167 serves as a coordination point for (6R)-10-formyltetrahydrofolate. A N(1)-(5-phospho-beta-D-ribosyl)glycinamide-binding site is contributed by Glu197.

The protein belongs to the GART family.

It carries out the reaction N(1)-(5-phospho-beta-D-ribosyl)glycinamide + (6R)-10-formyltetrahydrofolate = N(2)-formyl-N(1)-(5-phospho-beta-D-ribosyl)glycinamide + (6S)-5,6,7,8-tetrahydrofolate + H(+). The protein operates within purine metabolism; IMP biosynthesis via de novo pathway; N(2)-formyl-N(1)-(5-phospho-D-ribosyl)glycinamide from N(1)-(5-phospho-D-ribosyl)glycinamide (10-formyl THF route): step 1/1. The protein is Phosphoribosylglycinamide formyltransferase of Saccharomyces cerevisiae (strain ATCC 204508 / S288c) (Baker's yeast).